Consider the following 97-residue polypeptide: MTNSHGERRCTRYKLQKTVRERGISPVSKAIQEFEDGQMVHIDIDPSVQKGMPNPKFQGFTGKVIGQRGRSYILAVREGNSMKEVFSVPQHLKPQKY.

It belongs to the eukaryotic ribosomal protein eL21 family.

The chain is Large ribosomal subunit protein eL21 from Methanosarcina mazei (strain ATCC BAA-159 / DSM 3647 / Goe1 / Go1 / JCM 11833 / OCM 88) (Methanosarcina frisia).